Consider the following 297-residue polypeptide: Ribosomal RNA small subunit methyltransferase H (297 aa).

S-adenosyl-L-methionine is bound by residues 35–37 (GGH), aspartate 55, phenylalanine 82, aspartate 100, and glutamine 107.

It belongs to the methyltransferase superfamily. RsmH family.

It localises to the cytoplasm. The catalysed reaction is cytidine(1402) in 16S rRNA + S-adenosyl-L-methionine = N(4)-methylcytidine(1402) in 16S rRNA + S-adenosyl-L-homocysteine + H(+). Functionally, specifically methylates the N4 position of cytidine in position 1402 (C1402) of 16S rRNA. This chain is Ribosomal RNA small subunit methyltransferase H, found in Chlamydia caviae (strain ATCC VR-813 / DSM 19441 / 03DC25 / GPIC) (Chlamydophila caviae).